The chain runs to 235 residues: Lipoprotein-releasing system ATP-binding protein LolD (235 aa).

Residues phenylalanine 5 to isoleucine 235 enclose the ABC transporter domain. Glycine 40–serine 47 contacts ATP.

Belongs to the ABC transporter superfamily. Lipoprotein translocase (TC 3.A.1.125) family. As to quaternary structure, the complex is composed of two ATP-binding proteins (LolD) and two transmembrane proteins (LolC and LolE).

It localises to the cell inner membrane. Part of the ABC transporter complex LolCDE involved in the translocation of mature outer membrane-directed lipoproteins, from the inner membrane to the periplasmic chaperone, LolA. Responsible for the formation of the LolA-lipoprotein complex in an ATP-dependent manner. This Ehrlichia chaffeensis (strain ATCC CRL-10679 / Arkansas) protein is Lipoprotein-releasing system ATP-binding protein LolD.